Consider the following 238-residue polypeptide: ATP synthase subunit a (238 aa).

5 consecutive transmembrane segments (helical) span residues 17-37 (LSDMLMITITCLIVFIIAVAA), 75-95 (FLTLGVTLIMYVFVANMLGLP), 112-132 (DATVTLTLAVMVVALTHYYGV), 179-199 (ILLGLLASLGTHYGVLGAVGA), and 202-222 (FPIMVWQAFSIFVGTIQAFIF).

The protein belongs to the ATPase A chain family. As to quaternary structure, F-type ATPases have 2 components, CF(1) - the catalytic core - and CF(0) - the membrane proton channel. CF(1) has five subunits: alpha(3), beta(3), gamma(1), delta(1), epsilon(1). CF(0) has three main subunits: a(1), b(2) and c(9-12). The alpha and beta chains form an alternating ring which encloses part of the gamma chain. CF(1) is attached to CF(0) by a central stalk formed by the gamma and epsilon chains, while a peripheral stalk is formed by the delta and b chains.

The protein resides in the cell membrane. Key component of the proton channel; it plays a direct role in the translocation of protons across the membrane. This is ATP synthase subunit a from Bacillus sp. (strain PS3).